A 218-amino-acid polypeptide reads, in one-letter code: Lipoprotein-releasing system ATP-binding protein LolD (218 aa).

Positions 2-218 (IKLEGITKSF…HMVDGTIKKD (217 aa)) constitute an ABC transporter domain. 34–41 (GPSGAGKT) serves as a coordination point for ATP.

This sequence belongs to the ABC transporter superfamily. Lipoprotein translocase (TC 3.A.1.125) family. As to quaternary structure, the complex is composed of two ATP-binding proteins (LolD) and two transmembrane proteins (LolC and LolE).

The protein localises to the cell inner membrane. In terms of biological role, part of the ABC transporter complex LolCDE involved in the translocation of mature outer membrane-directed lipoproteins, from the inner membrane to the periplasmic chaperone, LolA. Responsible for the formation of the LolA-lipoprotein complex in an ATP-dependent manner. This is Lipoprotein-releasing system ATP-binding protein LolD from Bacteroides thetaiotaomicron (strain ATCC 29148 / DSM 2079 / JCM 5827 / CCUG 10774 / NCTC 10582 / VPI-5482 / E50).